A 217-amino-acid polypeptide reads, in one-letter code: GRB2-related adapter protein (217 aa).

The SH3 1 domain occupies 1–58 (MESVALYSFQATESDELAFNKGDTLKILNMEDDQNWYKAELRGAEGFVPKNYIRLKPH). Positions 60 to 152 (WYSGRISRQL…KRQVFLQDEE (93 aa)) constitute an SH2 domain. Residues 158–217 (PRACFAQAQFDFSAQDPSQLSFRRGDIIEVLERLDPSWWRGRLSGRIGFFPRSYVQPVHM) form the SH3 2 domain.

It belongs to the GRB2/sem-5/DRK family. In terms of assembly, associates through its SH2 domain with ligand-activated receptors for stem cell factor (KIT) and erythropoietin (EPOR). Also forms a stable complex with the Bcr-Abl oncoprotein. GRAP is associated with the Ras guanine nucleotide exchange factor SOS1, primarily through its N-terminal SH3 domain. Interacts with phosphorylated LAT upon TCR activation. Interacts with SHB.

The protein resides in the membrane. It localises to the synapse. Functionally, couples signals from receptor and cytoplasmic tyrosine kinases to the Ras signaling pathway. Plays a role in the inner ear and in hearing. The sequence is that of GRB2-related adapter protein (GRAP) from Bos taurus (Bovine).